Consider the following 207-residue polypeptide: Cytochrome c oxidase subunit 3 (207 aa).

A run of 5 helical transmembrane segments spans residues 28-48 (FLGFWLFLGGETVLFASLFAT), 70-90 (VVFMATMLLLTSSLTSVYAIY), 102-122 (LWFGITVLLGAGFLGLEIYEF), 144-164 (LVGTHGSHVAFGLLWILTLMI), and 186-206 (WHFIDVVWVFIFTVVYLMGMV).

The protein belongs to the cytochrome c oxidase subunit 3 family.

It localises to the cell membrane. The enzyme catalyses 4 Fe(II)-[cytochrome c] + O2 + 8 H(+)(in) = 4 Fe(III)-[cytochrome c] + 2 H2O + 4 H(+)(out). The polypeptide is Cytochrome c oxidase subunit 3 (ctaE) (Bacillus sp. (strain PS3)).